The sequence spans 325 residues: G-protein coupled receptor E6 (325 aa).

The next 7 helical transmembrane spans lie at 45–65 (LFGT…MGFF), 71–91 (FTPS…LWLM), 106–126 (IVTE…NVGM), 145–165 (PAAI…VIAV), 198–218 (LVAK…GTAL), 233–253 (AICV…LTAM), and 274–294 (VFIY…MFTG).

It belongs to the G-protein coupled receptor 1 family.

The protein localises to the host membrane. The polypeptide is G-protein coupled receptor E6 (E6) (Equus caballus (Horse)).